The chain runs to 27 residues: RSCCPCYWGGCPWGQNCYPEGCSGPKV.

3 disulfide bridges follow: Cys3–Cys17, Cys4–Cys11, and Cys6–Cys22.

It belongs to the sea anemone short toxin (type III) family.

The protein localises to the secreted. The protein resides in the nematocyst. Functionally, specific arthropod (crab and insect) toxin that inhibits inactivation of voltage-gated sodium channels. It competes well with the site-3 toxin LqhalphaIT (from the scorpion L.quinquestriatus (AC P17728)) on binding to cockroach neuronal membranes (Ki=21.4 nM), and inhibits the inactivation of D.melanogaster channel (DmNav1), but not that of mammalian Navs expressed in Xenopus oocytes. Its activity is synergically enhanced by ligands of receptor site-4 (Bj-xtrIT (AC P56637)). Its ability to inhibit the channel mutant DmNav1[D1701R] only decreases 5-fold, whereas the inhibition activity is completely lost by LqhalphaIT and Av2 when tested on DmNav1[D1701R]. The polypeptide is Delta-actitoxin-Avd2a (Anemonia sulcata (Mediterranean snakelocks sea anemone)).